A 312-amino-acid chain; its full sequence is HTH-type transcriptional regulator TdcA (312 aa).

In terms of domain architecture, HTH lysR-type spans 7 to 64 (PKTQHLVVFQEVIRSGSIGSAAKELGLTQPAVSKIINDIEDYFGVELVVRKNTGVTLT). The H-T-H motif DNA-binding region spans 24 to 43 (IGSAAKELGLTQPAVSKIIN).

This sequence belongs to the LysR transcriptional regulatory family.

It participates in amino-acid degradation; L-threonine degradation via propanoate pathway [regulation]. Transcriptional activator for the tdcABCDE operon. The protein is HTH-type transcriptional regulator TdcA (tdcA) of Escherichia coli O157:H7.